Reading from the N-terminus, the 123-residue chain is Small ribosomal subunit protein uS13 (123 aa).

The segment at 92–123 (HRRGLPVRGQKTKTNARTRKGPKKLVVSRKKK) is disordered.

This sequence belongs to the universal ribosomal protein uS13 family. Part of the 30S ribosomal subunit. Forms a loose heterodimer with protein S19. Forms two bridges to the 50S subunit in the 70S ribosome.

Its function is as follows. Located at the top of the head of the 30S subunit, it contacts several helices of the 16S rRNA. In the 70S ribosome it contacts the 23S rRNA (bridge B1a) and protein L5 of the 50S subunit (bridge B1b), connecting the 2 subunits; these bridges are implicated in subunit movement. Contacts the tRNAs in the A and P-sites. The sequence is that of Small ribosomal subunit protein uS13 from Clostridium tetani (strain Massachusetts / E88).